Here is an 83-residue protein sequence, read N- to C-terminus: Small ribosomal subunit protein bS20 (83 aa).

Belongs to the bacterial ribosomal protein bS20 family.

Binds directly to 16S ribosomal RNA. This is Small ribosomal subunit protein bS20 from Leuconostoc mesenteroides subsp. mesenteroides (strain ATCC 8293 / DSM 20343 / BCRC 11652 / CCM 1803 / JCM 6124 / NCDO 523 / NBRC 100496 / NCIMB 8023 / NCTC 12954 / NRRL B-1118 / 37Y).